Consider the following 433-residue polypeptide: uncharacterized protein (433 aa).

The protein belongs to the mimivirus R160 family.

It localises to the virion. This is an uncharacterized protein from Acanthamoeba polyphaga mimivirus (APMV).